The following is a 550-amino-acid chain: Arginine--tRNA ligase (550 aa).

The 'HIGH' region motif lies at 130-140 (ANPTGPIHLGG).

This sequence belongs to the class-I aminoacyl-tRNA synthetase family. In terms of assembly, monomer.

It is found in the cytoplasm. It carries out the reaction tRNA(Arg) + L-arginine + ATP = L-arginyl-tRNA(Arg) + AMP + diphosphate. This is Arginine--tRNA ligase from Rhodococcus erythropolis (strain PR4 / NBRC 100887).